A 181-amino-acid chain; its full sequence is Shikimate kinase 2 (181 aa).

12 to 17 (GCGKTT) contributes to the ATP binding site. Mg(2+)-binding residues include Thr-16 and Asp-32. Residues Asp-34, Arg-58, and Gly-79 each contribute to the substrate site. Residues 112-126 (EAEPEVGLRPTLTGK) form an LID domain region. Arg-120 contacts ATP. Arg-139 is a binding site for substrate.

Belongs to the shikimate kinase family. AroL subfamily. As to quaternary structure, monomer. Requires Mg(2+) as cofactor.

The protein resides in the cytoplasm. The catalysed reaction is shikimate + ATP = 3-phosphoshikimate + ADP + H(+). Its pathway is metabolic intermediate biosynthesis; chorismate biosynthesis; chorismate from D-erythrose 4-phosphate and phosphoenolpyruvate: step 5/7. In terms of biological role, catalyzes the specific phosphorylation of the 3-hydroxyl group of shikimic acid using ATP as a cosubstrate. In Escherichia fergusonii (strain ATCC 35469 / DSM 13698 / CCUG 18766 / IAM 14443 / JCM 21226 / LMG 7866 / NBRC 102419 / NCTC 12128 / CDC 0568-73), this protein is Shikimate kinase 2.